Reading from the N-terminus, the 750-residue chain is Penicillin-binding protein 2x (750 aa).

Residues 29–49 (LSLLSVFVFAIFLVNFAVIIG) traverse the membrane as a helical segment. Ser337 serves as the catalytic Acyl-ester intermediate. PASTA domains are found at residues 632-691 (QQSP…ILSD) and 692-750 (KAEE…TLGD).

This sequence belongs to the transpeptidase family.

Its subcellular location is the cell membrane. In terms of biological role, a transpeptidase that forms peptide cross-links between adjacent glycan strands in cell wall peptidoglycan (PG). Part of the divisome machinery that synthesizes the septal cross wall. Beta-lactams inactivate the PBPs by acylating an essential serine residue in the active site of these proteins. This chain is Penicillin-binding protein 2x (pbpX), found in Streptococcus pneumoniae serotype 4 (strain ATCC BAA-334 / TIGR4).